The sequence spans 249 residues: uncharacterized protein (249 aa).

NADP(+) is bound at residue 11–34 (IFGGRSQIGGELARRLAAGATMVL). Position 142 (Ser-142) interacts with substrate. Residue Tyr-155 is the Proton acceptor of the active site.

The protein belongs to the short-chain dehydrogenases/reductases (SDR) family.

This is an uncharacterized protein from Mycobacterium tuberculosis (strain CDC 1551 / Oshkosh).